The sequence spans 146 residues: Lysozyme C-2 (146 aa).

The first 18 residues, 1 to 18 (MKTLLVLALLLLSVSVQA), serve as a signal peptide directing secretion. The C-type lysozyme domain occupies 19–146 (KVYDRCEFAR…VSQYIRGCKL (128 aa)). 4 disulfide bridges follow: cysteine 24–cysteine 144, cysteine 48–cysteine 132, cysteine 81–cysteine 97, and cysteine 93–cysteine 111. Active-site residues include glutamate 53 and aspartate 69.

This sequence belongs to the glycosyl hydrolase 22 family. Monomer.

The protein localises to the secreted. The catalysed reaction is Hydrolysis of (1-&gt;4)-beta-linkages between N-acetylmuramic acid and N-acetyl-D-glucosamine residues in a peptidoglycan and between N-acetyl-D-glucosamine residues in chitodextrins.. Its function is as follows. Lysozymes have primarily a bacteriolytic function; those in tissues and body fluids are associated with the monocyte-macrophage system and enhance the activity of immunoagents. This is Lysozyme C-2 from Sus scrofa (Pig).